A 448-amino-acid chain; its full sequence is MKSDTIAAIATAPGRGGVGVIRISGSNLLPFAFALTEKTPKPRYASLADFKAADGSTIDTGLLLYFPNPQSFTGEDVLELQGHGGPVVMQMLLARCLDLGARLAEPGEFSRRAFLNGKMDLAQAEAVADLIDAATASAARSAVRSLQGEFSRAIGELNDELINLRMLVEATLDFPEEDIDFLKAANAFGRLERLQLKLAEIFDRAGQGKLLQSGLHVVLAGQPNVGKSSLLNRLAGDDLAIVTPIAGTTRDALRSTIQIEGIPLHIIDTAGLRETDDEVEKIGIERSWKEIERSDVVLLLVDARTGVSESDREILARLPDRLQRITVYNKIDLTHRAAERHDEANGTAISLSAKANQGIELLRQELLRIAGWHQAEDVFIARERHLRALSAAQEHVAAARNVVEGALPALELFAEELRLAQQSLGEITGEFTADDLLGVIFSRFCIGK.

3 residues coordinate (6S)-5-formyl-5,6,7,8-tetrahydrofolate: arginine 22, glutamate 79, and lysine 118. A TrmE-type G domain is found at 214–371; sequence GLHVVLAGQP…LRQELLRIAG (158 aa). A K(+)-binding site is contributed by asparagine 224. GTP-binding positions include 224–229, 243–249, and 268–271; these read NVGKSS, TPIAGTT, and DTAG. Serine 228 is a binding site for Mg(2+). Residues threonine 243, isoleucine 245, and threonine 248 each coordinate K(+). Residue threonine 249 participates in Mg(2+) binding. A (6S)-5-formyl-5,6,7,8-tetrahydrofolate-binding site is contributed by lysine 448.

This sequence belongs to the TRAFAC class TrmE-Era-EngA-EngB-Septin-like GTPase superfamily. TrmE GTPase family. As to quaternary structure, homodimer. Heterotetramer of two MnmE and two MnmG subunits. Requires K(+) as cofactor.

Its subcellular location is the cytoplasm. Functionally, exhibits a very high intrinsic GTPase hydrolysis rate. Involved in the addition of a carboxymethylaminomethyl (cmnm) group at the wobble position (U34) of certain tRNAs, forming tRNA-cmnm(5)s(2)U34. The chain is tRNA modification GTPase MnmE from Dechloromonas aromatica (strain RCB).